Consider the following 612-residue polypeptide: Beta-mannosyltransferase 5 (612 aa).

Residues 1-12 are Cytoplasmic-facing; that stretch reads MVQKQYRFAPKS. Residues 13-33 form a helical membrane-spanning segment; that stretch reads IFTFVFLCFVAIVVIISTSSL. Over 34–612 the chain is Extracellular; sequence VQVEESLDPI…YRAHLKRWQN (579 aa). 3 N-linked (GlcNAc...) asparagine glycosylation sites follow: Asn224, Asn230, and Asn480.

Belongs to the BMT family.

Its subcellular location is the membrane. Functionally, beta-mannosyltransferase involved in cell wall biosynthesis. Required for beta-1,2-mannose transfer on phospholipomannan. The chain is Beta-mannosyltransferase 5 (BMT5) from Candida albicans (strain SC5314 / ATCC MYA-2876) (Yeast).